The chain runs to 60 residues: Myrmicitoxin(1)-Pr4c (60 aa).

Residues 1–23 form the signal peptide; the sequence is MKAIIFLFAVLTVVAIIIPIISG. A propeptide spanning residues 24–33 is cleaved from the precursor; sequence EPNAGPHAAS. Q59 carries the post-translational modification Glutamine amide.

It belongs to the formicidae venom clade 2 family. Expressed by the venom gland.

It localises to the secreted. Its function is as follows. Toxin that causes a rapid and irreversible paralysis when intrathoracically injected into insects (blowflies). Does not cause spontaneous nocifensive behaviors by intraplantar injection in mice. This chain is Myrmicitoxin(1)-Pr4c, found in Pogonomyrmex rugosus (Desert harvester ant).